Consider the following 712-residue polypeptide: Copper amine oxidase 1 (712 aa).

A319–L330 is a binding site for substrate. The active-site Proton acceptor is the D321. Residues C340 and C366 are joined by a disulfide bond. A substrate-binding site is contributed by A404–Y409. Y407 functions as the Schiff-base intermediate with substrate; via topaquinone in the catalytic mechanism. Y407 is modified (2',4',5'-topaquinone). Residues H458 and H460 each coordinate Cu cation. The Mn(2+) site is built by D616 and I617. H627 provides a ligand contact to Cu cation.

Belongs to the copper/topaquinone oxidase family. Homodimer. Cu cation serves as cofactor. Zn(2+) is required as a cofactor. The cofactor is L-topaquinone. Requires Mn(2+) as cofactor. Topaquinone (TPQ) is generated by copper-dependent autoxidation of a specific tyrosyl residue.

It localises to the cytoplasm. It catalyses the reaction a primary methyl amine + O2 + H2O = an aldehyde + H2O2 + NH4(+). Its function is as follows. Copper amine oxidase involved in the metabolism of xenobiotic and biogenic amines. Capable of catalyzing the oxidative deamination of primary amines such as ethylamine as alternate sources of nitrogen to support growth. The sequence is that of Copper amine oxidase 1 (cao1) from Schizosaccharomyces pombe (strain 972 / ATCC 24843) (Fission yeast).